Reading from the N-terminus, the 124-residue chain is Putative B3 domain-containing protein At1g51970 (124 aa).

Positions 18-124 form a DNA-binding region, TF-B3; that stretch reads VLKKNLTESD…SRRFLFHHIN (107 aa).

It is found in the nucleus. In Arabidopsis thaliana (Mouse-ear cress), this protein is Putative B3 domain-containing protein At1g51970.